The chain runs to 293 residues: Caspase-6 (293 aa).

The disordered stretch occupies residues 1–20 (MSSEPPPRRARGPGEEQNMT). Residues 1–23 (MSSEPPPRRARGPGEEQNMTEID) constitute a propeptide that is removed on maturation. The tri-arginine exosite stretch occupies residues 42-44 (KRR). Residue Ser-79 is modified to Phosphoserine. His-121 is an active-site residue. The tract at residues 125 to 142 (NHIYAYDAKIEIQTLTGL) is 130's region. Cys-163 is an active-site residue. A propeptide spanning residues 180 to 193 (HRTDTPDANLTQVD) is cleaved from the precursor. Residue Ser-257 is modified to Phosphoserine. S-palmitoyl cysteine attachment occurs at residues Cys-264 and Cys-277.

It belongs to the peptidase C14A family. As to quaternary structure, heterotetramer that consists of two anti-parallel arranged heterodimers, each one formed by a 18 kDa (p18) and a 11 kDa (p11) subunits. Interacts with BIRC6/bruce. Interacts with RIPK3. In terms of assembly, heterotetramer that consists of two anti-parallel arranged heterodimers, each one formed by a 18 kDa (Caspase-6 subunit p18) and a 11 kDa (Caspase-6 subunit p11) subunit. In terms of processing, phosphorylated by NUAK1; phosphorylation inhibits self-activation. Phosphorylation at Ser-257 by AMP-activated protein kinase (PRKAA1 or PRKAA2) inhibits autocleavage, preventing caspase activation, thereby preventing hepatocyte apoptosis. Post-translationally, palmitoylation by ZDHHC17 blocks dimerization and subsequent activation, leading to inhibit the cysteine protease activity. Can be cleaved and activated by different caspases, depending on the context. Cleaved and activated by caspase-8 (CASP8) and subsequently by caspase-3 (CASP3). Can also undergo autoactivation by mediating autocleavage at Asp-179 and Asp-193, while it is not able to cleave its N-terminal disordered prodomain. Cleaved and activated by CASP1, possibly in the context of inflammation.

It is found in the cytoplasm. The protein localises to the nucleus. The catalysed reaction is Strict requirement for Asp at position P1 and has a preferred cleavage sequence of Val-Glu-His-Asp-|-.. During activation, the N-terminal disordered prodomain is removed by cleavage. Concomitantly, double cleavage gives rise to a large 18-kDa and a small 11-kDa subunit. The two large and two small subunits then assemble to form the active CASP6 complex. Can be cleaved and activated by different caspases, depending on the context. Cleaved and activated by caspase-8 (CASP8) and subsequently by caspase-3 (CASP3). Can also undergo autoactivation by mediating autocleavage at Asp-179 and Asp-193, while it is not able to cleave its N-terminal disordered prodomain. Intramolecular cleavage at Asp-193 is a prerequisite for CASP6 self-activation. Cleaved and activated by CASP1 in neurons, possibly in the context of inflammation. Phosphorylation at Ser-257 inhibits autocleavage, preventing caspase activation. Its function is as follows. Cysteine protease that plays essential roles in programmed cell death, axonal degeneration, development and innate immunity. Acts as a non-canonical executioner caspase during apoptosis: localizes in the nucleus and cleaves the nuclear structural protein NUMA1 and lamin A/LMNA thereby inducing nuclear shrinkage and fragmentation. Lamin-A/LMNA cleavage is required for chromatin condensation and nuclear disassembly during apoptotic execution. Acts as a regulator of liver damage by promoting hepatocyte apoptosis: in absence of phosphorylation by AMP-activated protein kinase (AMPK), catalyzes cleavage of BID, leading to cytochrome c release, thereby participating in nonalcoholic steatohepatitis. Cleaves PARK7/DJ-1 in cells undergoing apoptosis. Involved in intrinsic apoptosis by mediating cleavage of RIPK1. Furthermore, cleaves many transcription factors such as NF-kappa-B and cAMP response element-binding protein/CREBBP. Cleaves phospholipid scramblase proteins XKR4 and XKR9. In addition to apoptosis, involved in different forms of programmed cell death. Plays an essential role in defense against viruses by acting as a central mediator of the ZBP1-mediated pyroptosis, apoptosis, and necroptosis (PANoptosis), independently of its cysteine protease activity. PANoptosis is a unique inflammatory programmed cell death, which provides a molecular scaffold that allows the interactions and activation of machinery required for inflammasome/pyroptosis, apoptosis and necroptosis. Mechanistically, interacts with RIPK3 and enhances the interaction between RIPK3 and ZBP1, leading to ZBP1-mediated inflammasome activation and cell death. Plays an essential role in axon degeneration during axon pruning which is the remodeling of axons during neurogenesis but not apoptosis. Regulates B-cell programs both during early development and after antigen stimulation. This Bos taurus (Bovine) protein is Caspase-6.